Reading from the N-terminus, the 355-residue chain is Uroporphyrinogen decarboxylase (355 aa).

Residues 27-31, Asp77, Tyr154, Thr209, and His327 each bind substrate; that span reads RQAGR.

Belongs to the uroporphyrinogen decarboxylase family. In terms of assembly, homodimer.

It localises to the cytoplasm. The catalysed reaction is uroporphyrinogen III + 4 H(+) = coproporphyrinogen III + 4 CO2. Its pathway is porphyrin-containing compound metabolism; protoporphyrin-IX biosynthesis; coproporphyrinogen-III from 5-aminolevulinate: step 4/4. In terms of biological role, catalyzes the decarboxylation of four acetate groups of uroporphyrinogen-III to yield coproporphyrinogen-III. This chain is Uroporphyrinogen decarboxylase, found in Yersinia enterocolitica serotype O:8 / biotype 1B (strain NCTC 13174 / 8081).